The chain runs to 270 residues: Phosphatidylglycerol--prolipoprotein diacylglyceryl transferase (270 aa).

4 helical membrane-spanning segments follow: residues 19-39 (FPVYWYGIIIGTGVLLGLWLA), 56-76 (LVLIAVPIAILFARMYYVIFE), 92-112 (QGGLAIHGGLIGAVITGVLFA), and 116-136 (GVSFWKLADIAAPSILLGQAI). Arginine 138 contributes to the a 1,2-diacyl-sn-glycero-3-phospho-(1'-sn-glycerol) binding site. 3 helical membrane passes run 178 to 198 (HPTFLYESLWNFAGVILLLAL), 206 to 226 (GELFFTYLIWYSVGRFFVEGL), and 236 to 256 (LRIAQVMSIGLVVISIIFIIV).

It belongs to the Lgt family.

The protein localises to the cell membrane. It catalyses the reaction L-cysteinyl-[prolipoprotein] + a 1,2-diacyl-sn-glycero-3-phospho-(1'-sn-glycerol) = an S-1,2-diacyl-sn-glyceryl-L-cysteinyl-[prolipoprotein] + sn-glycerol 1-phosphate + H(+). It participates in protein modification; lipoprotein biosynthesis (diacylglyceryl transfer). Functionally, catalyzes the transfer of the diacylglyceryl group from phosphatidylglycerol to the sulfhydryl group of the N-terminal cysteine of a prolipoprotein, the first step in the formation of mature lipoproteins. The chain is Phosphatidylglycerol--prolipoprotein diacylglyceryl transferase from Bacillus cereus (strain B4264).